A 132-amino-acid polypeptide reads, in one-letter code: L-ectoine synthase (132 aa).

The protein belongs to the ectoine synthase family.

The catalysed reaction is (2S)-4-acetamido-2-aminobutanoate = L-ectoine + H2O. The protein operates within amine and polyamine biosynthesis; ectoine biosynthesis; L-ectoine from L-aspartate 4-semialdehyde: step 3/3. Catalyzes the circularization of gamma-N-acetyl-alpha,gamma-diaminobutyric acid (ADABA) to ectoine (1,4,5,6-tetrahydro-2-methyl-4-pyrimidine carboxylic acid), which is an excellent osmoprotectant. This chain is L-ectoine synthase, found in Saccharophagus degradans (strain 2-40 / ATCC 43961 / DSM 17024).